The primary structure comprises 121 residues: Large ribosomal subunit protein uL18 (121 aa).

The protein belongs to the universal ribosomal protein uL18 family. Part of the 50S ribosomal subunit; part of the 5S rRNA/L5/L18/L25 subcomplex. Contacts the 5S and 23S rRNAs.

This is one of the proteins that bind and probably mediate the attachment of the 5S RNA into the large ribosomal subunit, where it forms part of the central protuberance. This chain is Large ribosomal subunit protein uL18, found in Buchnera aphidicola subsp. Baizongia pistaciae (strain Bp).